Reading from the N-terminus, the 268-residue chain is Cell division coordinator CpoB (268 aa).

The N-terminal stretch at 1–21 (MRMCRRVVTVLALSLPLAAWA) is a signal peptide. Residues 58 to 94 (QLFMQLQQMQDQLSRQQGIIEELQNDVSRMKQENLER) adopt a coiled-coil conformation. Residues 104–146 (SGAAPAATPDNSSGGGASNAAPDAAAGAAAQQPAGSSQPGDPA) form a disordered region. The segment covering 121 to 143 (SNAAPDAAAGAAAQQPAGSSQPG) has biased composition (low complexity). 3 TPR repeats span residues 149 to 181 (KLYY…YPNS), 185 to 218 (GNAQ…YPKH), and 222 to 255 (PDSL…YPGT).

Belongs to the CpoB family.

The protein localises to the periplasm. Its function is as follows. Mediates coordination of peptidoglycan synthesis and outer membrane constriction during cell division. This chain is Cell division coordinator CpoB, found in Pseudomonas putida (strain ATCC 47054 / DSM 6125 / CFBP 8728 / NCIMB 11950 / KT2440).